The following is a 336-amino-acid chain: Fructose-1,6-bisphosphatase class 1 (336 aa).

Residues Glu90, Asp112, Leu114, and Asp115 each coordinate Mg(2+). Substrate-binding positions include 115–118, Asn211, and Lys277; that span reads DGSS. Residue Glu283 participates in Mg(2+) binding.

The protein belongs to the FBPase class 1 family. Homotetramer. Requires Mg(2+) as cofactor.

The protein resides in the cytoplasm. The enzyme catalyses beta-D-fructose 1,6-bisphosphate + H2O = beta-D-fructose 6-phosphate + phosphate. It participates in carbohydrate biosynthesis; gluconeogenesis. In Pseudomonas aeruginosa (strain ATCC 15692 / DSM 22644 / CIP 104116 / JCM 14847 / LMG 12228 / 1C / PRS 101 / PAO1), this protein is Fructose-1,6-bisphosphatase class 1.